A 332-amino-acid chain; its full sequence is Ketol-acid reductoisomerase (NADP(+)) (332 aa).

The 181-residue stretch at 3–183 folds into the KARI N-terminal Rossmann domain; that stretch reads TEIFYDADAD…GGARAGVIKT (181 aa). NADP(+) is bound by residues 26–29, serine 52, serine 54, and 84–87; these read YGSQ and DTKQ. The active site involves histidine 109. Glycine 135 serves as a coordination point for NADP(+). In terms of domain architecture, KARI C-terminal knotted spans 184–329; sequence TFTEETETDL…KKLRSLMSWT (146 aa). Residues aspartate 192, glutamate 196, glutamate 228, and glutamate 232 each contribute to the Mg(2+) site. A substrate-binding site is contributed by serine 253.

This sequence belongs to the ketol-acid reductoisomerase family. Mg(2+) serves as cofactor.

The catalysed reaction is (2R)-2,3-dihydroxy-3-methylbutanoate + NADP(+) = (2S)-2-acetolactate + NADPH + H(+). It catalyses the reaction (2R,3R)-2,3-dihydroxy-3-methylpentanoate + NADP(+) = (S)-2-ethyl-2-hydroxy-3-oxobutanoate + NADPH + H(+). It participates in amino-acid biosynthesis; L-isoleucine biosynthesis; L-isoleucine from 2-oxobutanoate: step 2/4. Its pathway is amino-acid biosynthesis; L-valine biosynthesis; L-valine from pyruvate: step 2/4. Involved in the biosynthesis of branched-chain amino acids (BCAA). Catalyzes an alkyl-migration followed by a ketol-acid reduction of (S)-2-acetolactate (S2AL) to yield (R)-2,3-dihydroxy-isovalerate. In the isomerase reaction, S2AL is rearranged via a Mg-dependent methyl migration to produce 3-hydroxy-3-methyl-2-ketobutyrate (HMKB). In the reductase reaction, this 2-ketoacid undergoes a metal-dependent reduction by NADPH to yield (R)-2,3-dihydroxy-isovalerate. In Saccharopolyspora erythraea (strain ATCC 11635 / DSM 40517 / JCM 4748 / NBRC 13426 / NCIMB 8594 / NRRL 2338), this protein is Ketol-acid reductoisomerase (NADP(+)).